The sequence spans 215 residues: L-fuculose phosphate aldolase (215 aa).

Residues 28–29 (GN), 43–44 (TG), and 71–72 (SS) contribute to the substrate site. Glutamate 73 functions as the Proton donor/acceptor in the catalytic mechanism. Positions 73, 92, 94, and 155 each coordinate Zn(2+).

Belongs to the aldolase class II family. AraD/FucA subfamily. In terms of assembly, homotetramer. Zn(2+) is required as a cofactor.

The enzyme catalyses L-fuculose 1-phosphate = (S)-lactaldehyde + dihydroxyacetone phosphate. Its pathway is carbohydrate degradation; L-fucose degradation; L-lactaldehyde and glycerone phosphate from L-fucose: step 3/3. Its function is as follows. Involved in the degradation of L-fucose and D-arabinose. Catalyzes the reversible cleavage of L-fuculose 1-phosphate (Fuc1P) to yield dihydroxyacetone phosphate (DHAP) and L-lactaldehyde. This Escherichia coli O6:H1 (strain CFT073 / ATCC 700928 / UPEC) protein is L-fuculose phosphate aldolase.